Here is a 349-residue protein sequence, read N- to C-terminus: Phosphoribosylformylglycinamidine cyclo-ligase (349 aa).

This sequence belongs to the AIR synthase family.

The protein localises to the cytoplasm. It catalyses the reaction 2-formamido-N(1)-(5-O-phospho-beta-D-ribosyl)acetamidine + ATP = 5-amino-1-(5-phospho-beta-D-ribosyl)imidazole + ADP + phosphate + H(+). Its pathway is purine metabolism; IMP biosynthesis via de novo pathway; 5-amino-1-(5-phospho-D-ribosyl)imidazole from N(2)-formyl-N(1)-(5-phospho-D-ribosyl)glycinamide: step 2/2. This chain is Phosphoribosylformylglycinamidine cyclo-ligase, found in Bordetella pertussis (strain Tohama I / ATCC BAA-589 / NCTC 13251).